Consider the following 172-residue polypeptide: Protein-export protein SecB (172 aa).

It belongs to the SecB family. Homotetramer, a dimer of dimers. One homotetramer interacts with 1 SecA dimer.

It localises to the cytoplasm. One of the proteins required for the normal export of preproteins out of the cell cytoplasm. It is a molecular chaperone that binds to a subset of precursor proteins, maintaining them in a translocation-competent state. It also specifically binds to its receptor SecA. The sequence is that of Protein-export protein SecB from Dinoroseobacter shibae (strain DSM 16493 / NCIMB 14021 / DFL 12).